A 390-amino-acid polypeptide reads, in one-letter code: Centrosomal protein of 44 kDa (390 aa).

Residues 11–195 (RNLEQVLRLL…ISEDTLSPIT (185 aa)) form a binds with microtubules and centrioles region. Residues 233–267 (EITALQTMLAECQEKLKELTLIEKRLDCLEQKMKG) are a coiled coil. Residues 323-347 (KNKVGRPASIPLSSRYSTASSDSTP) form a disordered region. 2 positions are modified to phosphoserine: Ser-331 and Ser-345. The span at 335 to 345 (SSRYSTASSDS) shows a compositional bias: low complexity. Thr-346 is subject to Phosphothreonine. Positions 361 to 385 (SEETTIQKMERMKKMFEETAELLKC) form a coiled coil.

In terms of assembly, interacts with CROCC. Interacts with POC1B; the interaction is direct and recruits POC1B to centriolar microtubules. Binds to centriolar microtubules.

It is found in the cytoplasm. Its subcellular location is the cytoskeleton. The protein localises to the microtubule organizing center. The protein resides in the centrosome. It localises to the centriole. It is found in the spindle pole. Its subcellular location is the midbody. Centriole-enriched microtubule-binding protein involved in centriole biogenesis. In collaboration with CEP295 and POC1B, is required for the centriole-to-centrosome conversion by ensuring the formation of bona fide centriole wall. Functions as a linker component that maintains centrosome cohesion. Associates with CROCC and regulates its stability and localization to the centrosome. The protein is Centrosomal protein of 44 kDa (CEP44) of Macaca fascicularis (Crab-eating macaque).